A 56-amino-acid polypeptide reads, in one-letter code: MPDQAQKTRPVGPGPSGGGEGPGSPKVEKPNTEELLKRMRKVDPDQAKRYRQRTGQ.

The tract at residues 1-56 (MPDQAQKTRPVGPGPSGGGEGPGSPKVEKPNTEELLKRMRKVDPDQAKRYRQRTGQ) is disordered. Basic and acidic residues predominate over residues 26 to 48 (KVEKPNTEELLKRMRKVDPDQAK). A Deamidated glutamine modification is found at Gln56. Residue Gln56 forms an Isoglutamyl lysine isopeptide (Gln-Lys) (interchain with K-? in acceptor proteins) linkage.

It belongs to the ubiquitin-like protein UBact family. Post-translationally, may be modified by deamidation of its C-terminal glutamine to glutamate by the adjacently encoded deamidase. This could be a prerequisite to the subsequent conjugation, as shown in the other prokaryotic ubiquitin-like protein Pup.

Its function is as follows. May function as a protein modifier covalently attached to lysine residues of substrate proteins. This may serve to target the modified proteins for degradation by proteasomes. This chain is Prokaryotic ubiquitin-like protein UBact, found in Pedosphaera parvula (strain Ellin514).